Here is a 386-residue protein sequence, read N- to C-terminus: Patatin-2-Kuras 3 (386 aa).

The first 23 residues, 1 to 23, serve as a signal peptide directing secretion; sequence MATTKSVLVLFFMILATTSSTCA. Positions 32–229 constitute a PNPLA domain; that stretch reads LSIDGGGIKG…TVGDPALLSL (198 aa). The short motif at 36 to 41 is the GXGXXG element; the sequence is GGGIKG. Residues 75-79 carry the GXSXG motif; sequence GTSTG. S77 functions as the Nucleophile in the catalytic mechanism. The N-linked (GlcNAc...) asparagine glycan is linked to N115. D215 serves as the catalytic Proton acceptor. The DGA/G motif lies at 215-217; that stretch reads DGA. A coiled-coil region spans residues 321–384; sequence ENALTGTTTE…DRKKLRANKA (64 aa).

This sequence belongs to the patatin family. In terms of tissue distribution, tuber.

It localises to the vacuole. Functionally, probable lipolytic acyl hydrolase (LAH), an activity which is thought to be involved in the response of tubers to pathogens. The sequence is that of Patatin-2-Kuras 3 (pat2-k3) from Solanum tuberosum (Potato).